The sequence spans 914 residues: MRTLGAMAIMLVVMGTVIFLSFILRSRDILCGKTMKSHVISAVETSQLMVDHAVYNTMKRNLKKREVLSPAQLLSFFKLPESTSGAISRAAEIMETSIQVMKREQSQFSTDALSADILGTIANLSGCLPFMLPPRCPDTCLANKYRPITGACNNRDHPRWGASNTALARWLPPVYEDGFSQPKGWNPNFLYHGFPLPPVREVTRHLIQVSNEAVTEDDQYSDFLPVWGQYIDHDIALTPQSTSTAAFWGGVDCQLTCENQNPCFPIQLPSNSSGTTACLPFYRSSAACGTGDQGALFGNLSAANPRQQMNGLTSFLDASTVYGSSPGVEKQLRNWSSSAGLLRVNTLHLDAGRAYLPFATAACAPEPGTPRTNRTPCFLAGDGRASEVPALAAVHTLWLREHNRLASAFKAINKHWSANTAYQEARKVVGALHQIITMRDYIPKILGPDAFRQYVGPYEGYNPTVNPTVSNIFSTAAFRFGHATVHPLVRRLNTDFQEHTELPRLQLRDVFFRPWRLIQEGGLDPIVRGLLARAAKLQVQGQLMNEELTERLFVLSNVGTLDLASLNLQRGRDHGLPDYNEWREFCGLSRLETPAELNKAIANRSMVNKIMDLYKHADNIDVWLGGLAEKFLPGARTGPLFACIIGKQMKALRDGDRFWWENTNVFTDAQRQELEKHSLPRVICDNTGLTRVPVDAFRIGKFPQDFESCEDIPSMDLELWRETFPQDDKCVFPEEVDNGNFVHCEESGKLVLVYSCFHGYKLQGQEQVTCTQKGWDSEPPVCKDVNECADLTHPPCHPSAQCKNTKGSFQCVCTDPYVLGEDEKTCIDSGRLPRASWVSIALGALLIGGLASLTWIVICRWTHADKKATLPITERVTTQSGCRKSQGRGISPHKAAAQDTGQEPASGSRVLLCE.

A signal peptide spans 1-31 (MRTLGAMAIMLVVMGTVIFLSFILRSRDILC). Residues 32–834 (GKTMKSHVIS…TCIDSGRLPR (803 aa)) are Extracellular-facing. Residue N123 is glycosylated (N-linked (GlcNAc...) asparagine). C136 and C152 are joined by a disulfide. A heme b-binding site is contributed by D232. The Proton acceptor role is filled by H233. Position 234 (D234) interacts with Ca(2+). 2 disulfide bridges follow: C253–C263 and C257–C278. N271 and N299 each carry an N-linked (GlcNAc...) asparagine glycan. Positions 313, 315, 317, and 319 each coordinate Ca(2+). An N-linked (GlcNAc...) asparagine glycan is attached at N334. Heme b is bound by residues E387 and H482. 7 cysteine pairs are disulfide-bonded: C586/C643, C684/C709, C730/C770, C756/C782, C788/C802, C796/C811, and C813/C826. N603 carries N-linked (GlcNAc...) asparagine glycosylation. A Sushi domain is found at 728-783 (DKCVFPEEVDNGNFVHCEESGKLVLVYSCFHGYKLQGQEQVTCTQKGWDSEPPVCK). Residues 784–827 (DVNECADLTHPPCHPSAQCKNTKGSFQCVCTDPYVLGEDEKTCI) form the EGF-like; calcium-binding domain. Residues 835–859 (ASWVSIALGALLIGGLASLTWIVIC) traverse the membrane as a helical segment. The Cytoplasmic portion of the chain corresponds to 860-914 (RWTHADKKATLPITERVTTQSGCRKSQGRGISPHKAAAQDTGQEPASGSRVLLCE). Residues 881–909 (GCRKSQGRGISPHKAAAQDTGQEPASGSR) form a disordered region.

It belongs to the peroxidase family. XPO subfamily. Interacts with DUOX1, DUOX2 and CYBA. The cofactor is Ca(2+). Heme b is required as a cofactor. In terms of processing, heme is covalently bound through a H(2)O(2)-dependent autocatalytic process. Heme insertion is important for the delivery of protein at the cell surface. Post-translationally, cleaved in its N-terminal part.

The protein localises to the membrane. It catalyses the reaction 2 iodide + H2O2 + 2 H(+) = diiodine + 2 H2O. The enzyme catalyses [thyroglobulin]-L-tyrosine + iodide + H2O2 + H(+) = [thyroglobulin]-3-iodo-L-tyrosine + 2 H2O. It carries out the reaction [thyroglobulin]-3-iodo-L-tyrosine + iodide + H2O2 + H(+) = [thyroglobulin]-3,5-diiodo-L-tyrosine + 2 H2O. The catalysed reaction is 2 [thyroglobulin]-3,5-diiodo-L-tyrosine + H2O2 = [thyroglobulin]-L-thyroxine + [thyroglobulin]-dehydroalanine + 2 H2O. It catalyses the reaction [thyroglobulin]-3-iodo-L-tyrosine + [thyroglobulin]-3,5-diiodo-L-tyrosine + H2O2 = [thyroglobulin]-3,3',5-triiodo-L-thyronine + [thyroglobulin]-dehydroalanine + 2 H2O. The protein operates within hormone biosynthesis; thyroid hormone biosynthesis. In terms of biological role, iodination and coupling of the hormonogenic tyrosines in thyroglobulin to yield the thyroid hormones T(3) and T(4). This Mus musculus (Mouse) protein is Thyroid peroxidase (Tpo).